The sequence spans 110 residues: Iron-sulfur cluster assembly protein CyaY (110 aa).

This sequence belongs to the frataxin family.

Involved in iron-sulfur (Fe-S) cluster assembly. May act as a regulator of Fe-S biogenesis. This Pseudomonas putida (strain GB-1) protein is Iron-sulfur cluster assembly protein CyaY.